Here is a 165-residue protein sequence, read N- to C-terminus: SsrA-binding protein (165 aa).

The disordered stretch occupies residues 141–165 (EDRRHAIAERETKREMDREISRRRR).

It belongs to the SmpB family.

It localises to the cytoplasm. Required for rescue of stalled ribosomes mediated by trans-translation. Binds to transfer-messenger RNA (tmRNA), required for stable association of tmRNA with ribosomes. tmRNA and SmpB together mimic tRNA shape, replacing the anticodon stem-loop with SmpB. tmRNA is encoded by the ssrA gene; the 2 termini fold to resemble tRNA(Ala) and it encodes a 'tag peptide', a short internal open reading frame. During trans-translation Ala-aminoacylated tmRNA acts like a tRNA, entering the A-site of stalled ribosomes, displacing the stalled mRNA. The ribosome then switches to translate the ORF on the tmRNA; the nascent peptide is terminated with the 'tag peptide' encoded by the tmRNA and targeted for degradation. The ribosome is freed to recommence translation, which seems to be the essential function of trans-translation. This Anaeromyxobacter sp. (strain Fw109-5) protein is SsrA-binding protein.